We begin with the raw amino-acid sequence, 1044 residues long: Probable pre-mRNA-splicing factor ATP-dependent RNA helicase DEAH6 (1044 aa).

Disordered regions lie at residues 99-134 (EADH…SEQL) and 152-211 (RRKV…VRRD). The span at 157–167 (EDEDDGTESEE) shows a compositional bias: acidic residues. The segment covering 168–211 (ERLRDQREREELEQHLRERDTARTRKLTEPKMSKKEQEEFVRRD) has biased composition (basic and acidic residues). In terms of domain architecture, Helicase ATP-binding spans 414 to 577 (LNAVKDHQVL…FDQAPIFRFP (164 aa)). 427–434 (GETGSGKT) contributes to the ATP binding site. A DEAH box motif is present at residues 524–527 (DEAH). In terms of domain architecture, Helicase C-terminal spans 599-775 (AITTVLTIHV…SVVLSLKSLG (177 aa)).

The protein belongs to the DEAD box helicase family. DEAH subfamily. PRP2 sub-subfamily. As to expression, predominantly expressed in flowers.

The enzyme catalyses ATP + H2O = ADP + phosphate + H(+). May be involved in pre-mRNA splicing. This Arabidopsis thaliana (Mouse-ear cress) protein is Probable pre-mRNA-splicing factor ATP-dependent RNA helicase DEAH6.